Reading from the N-terminus, the 453-residue chain is uncharacterized protein (453 aa).

Disordered stretches follow at residues 140–161 and 311–332; these read YGESKRKRSKRSSKPLPGTRPQ and TTTRQPNFDKTKTPATMPSASS.

This is an uncharacterized protein from Caenorhabditis elegans.